Here is a 116-residue protein sequence, read N- to C-terminus: MALKIRLRQQGRKNHVVYRLVLADVESPRDGKYIELLGWYDPHSEQNYQLKSERIFYWLNQGAELTEKAGALVKQGAPGVYAELMAKKVARRAVVRQKRRAYRQRLAARKAEAAAK.

The protein belongs to the bacterial ribosomal protein bS16 family.

The polypeptide is Small ribosomal subunit protein bS16 (Chlamydia trachomatis serovar L2 (strain ATCC VR-902B / DSM 19102 / 434/Bu)).